A 307-amino-acid chain; its full sequence is Protoheme IX farnesyltransferase (307 aa).

The next 9 membrane-spanning stretches (helical) occupy residues 33-53 (IGIV…AFYF), 62-82 (LHIV…SCSI), 111-131 (RVLW…LMTT), 132-152 (VTAA…YTLW), 159-179 (LNTV…WTAV), 185-205 (IVPL…FLAL), 229-249 (MTKR…FYLF), 251-271 (LGIP…LLGL), and 287-307 (FVYS…ATIW).

It belongs to the UbiA prenyltransferase family. Protoheme IX farnesyltransferase subfamily. As to quaternary structure, interacts with CtaA.

It is found in the cell membrane. The catalysed reaction is heme b + (2E,6E)-farnesyl diphosphate + H2O = Fe(II)-heme o + diphosphate. It functions in the pathway porphyrin-containing compound metabolism; heme O biosynthesis; heme O from protoheme: step 1/1. In terms of biological role, converts heme B (protoheme IX) to heme O by substitution of the vinyl group on carbon 2 of heme B porphyrin ring with a hydroxyethyl farnesyl side group. This Geobacillus thermodenitrificans (strain NG80-2) protein is Protoheme IX farnesyltransferase.